The chain runs to 597 residues: Elongation factor 4 (597 aa).

The tr-type G domain maps to 2–184; the sequence is KHIRNFSIIA…TIVKSIPAPE (183 aa). GTP-binding positions include 14-19 and 131-134; these read DHGKST and NKID.

It belongs to the TRAFAC class translation factor GTPase superfamily. Classic translation factor GTPase family. LepA subfamily.

Its subcellular location is the cell inner membrane. The enzyme catalyses GTP + H2O = GDP + phosphate + H(+). Functionally, required for accurate and efficient protein synthesis under certain stress conditions. May act as a fidelity factor of the translation reaction, by catalyzing a one-codon backward translocation of tRNAs on improperly translocated ribosomes. Back-translocation proceeds from a post-translocation (POST) complex to a pre-translocation (PRE) complex, thus giving elongation factor G a second chance to translocate the tRNAs correctly. Binds to ribosomes in a GTP-dependent manner. The sequence is that of Elongation factor 4 from Aliivibrio fischeri (strain ATCC 700601 / ES114) (Vibrio fischeri).